Consider the following 460-residue polypeptide: Malonyl-coenzyme A:anthocyanin 3-O-glucoside-6''-O-malonyltransferase (460 aa).

Catalysis depends on proton acceptor residues histidine 173 and aspartate 400.

The protein belongs to the plant acyltransferase family.

The catalysed reaction is an anthocyanidin 3-O-beta-D-glucoside + malonyl-CoA = an anthocyanidin 3-O-(6-O-malonyl-beta-D-glucoside) + CoA. Completely inhibited by 5 mM N-ethylmaleimide or 0.1 mM Cu(2+). Partially inhibited by 0.1 mM Fe(2+) or 0.1 mM Hg(2+). In terms of biological role, catalyzes the transfer of the malonyl group from malonyl-CoA to pelargonidin 3-O-glucoside to produce pelargonidin 3-O-6''-O-malonylglucoside. Can also transfer the malonyl group from malonyl-CoA to cyanidin 3-O-glucoside, delphinidin 3-O-glucoside and quercetin 3-O-glucoside. The chain is Malonyl-coenzyme A:anthocyanin 3-O-glucoside-6''-O-malonyltransferase from Dahlia pinnata (Pinnate dahlia).